A 498-amino-acid polypeptide reads, in one-letter code: MDAMKYNDLRDFLTLLEQQGELKRITLPVDPHLEITEIWLDRTLRAGGPALLFENPKGYSMPVLCNLFGTPKRVAMGMGQEDVSALREVGKLLAFLKEPEPPKGFRDLFDKLPQFKQVLNMPTKRLRGAPCQQKIVSGDDVDLNRIPIMTCWPEDAAPLITWGLTVTRGPHKERQNLGIYRQQLIGKNKLIMRWLSHRGGALDYQEWCAAHPGERFPVSVALGADPATILGAVTPVPDTLSEYAFAGLLRGTKTEVVKCISNDLEVPASAEIVLEGYIEQGETAPEGPYGDHTGYYNEVDSFPVFTVTHITQREDAIYHSTYTGRPPDEPAVLGVALNEVFVPILQKQFPEIVDFYLPPEGCSYRLAVVTIKKQYAGHAKRVMMGVWSFLRQFMYTKFVIVCDDDVNARDWNDVIWAITTRMDPARDTVLVENTPIDYLDFASPVSGLGSKMGLDATNKWPGETQREWGRPIKKDPDVVAHIDAIWDELAIFNNGKSA.

Asparagine 176 is a binding site for Mn(2+). Prenylated FMN-binding positions include 179–181, 193–195, and 198–199; these read IYR, RWL, and RG. Glutamate 242 lines the Mn(2+) pocket. Residue aspartate 291 is the Proton donor of the active site.

Belongs to the UbiD family. As to quaternary structure, homohexamer. It depends on prenylated FMN as a cofactor. Requires Mn(2+) as cofactor.

The protein localises to the cell membrane. The enzyme catalyses a 4-hydroxy-3-(all-trans-polyprenyl)benzoate + H(+) = a 2-(all-trans-polyprenyl)phenol + CO2. It functions in the pathway cofactor biosynthesis; ubiquinone biosynthesis. Functionally, catalyzes the decarboxylation of 3-octaprenyl-4-hydroxy benzoate to 2-octaprenylphenol, an intermediate step in ubiquinone biosynthesis. The polypeptide is 3-octaprenyl-4-hydroxybenzoate carboxy-lyase (Escherichia coli O6:K15:H31 (strain 536 / UPEC)).